The chain runs to 143 residues: Transcriptional regulator MraZ (143 aa).

2 SpoVT-AbrB domains span residues 5-47 and 76-119; these read EYQH…PQDE and ATEC…SKER.

This sequence belongs to the MraZ family. Forms oligomers.

It is found in the cytoplasm. The protein resides in the nucleoid. The protein is Transcriptional regulator MraZ of Brevibacillus brevis (strain 47 / JCM 6285 / NBRC 100599).